Here is a 644-residue protein sequence, read N- to C-terminus: Exoribonuclease 2 (644 aa).

The 328-residue stretch at arginine 189–threonine 516 folds into the RNB domain. The 83-residue stretch at aspartate 561–valine 643 folds into the S1 motif domain.

It belongs to the RNR ribonuclease family. RNase II subfamily.

It localises to the cytoplasm. The enzyme catalyses Exonucleolytic cleavage in the 3'- to 5'-direction to yield nucleoside 5'-phosphates.. Its function is as follows. Involved in mRNA degradation. Hydrolyzes single-stranded polyribonucleotides processively in the 3' to 5' direction. The protein is Exoribonuclease 2 of Yersinia enterocolitica serotype O:8 / biotype 1B (strain NCTC 13174 / 8081).